The following is a 521-amino-acid chain: Vang-like protein 2 (521 aa).

The interval 1–81 is disordered; it reads MDTESQYSGY…TTVVTGTSEH (81 aa). Topologically, residues 1-108 are cytoplasmic; the sequence is MDTESQYSGY…VPLDCSRHLG (108 aa). Residues 15–33 are compositionally biased toward basic residues; sequence GHSRSSRKHRDRRDRHRSK. Positions 57–67 are enriched in basic and acidic residues; sequence ESTRGDERDDN. Over residues 69–81 the composition is skewed to low complexity; it reads GETTTVVTGTSEH. Residues 109–129 traverse the membrane as a helical segment; sequence VAAGATLALLSFLTPLAFLLL. Residues 130 to 147 are Extracellular-facing; sequence PPLLWREELEPCGTACEG. Residues 148 to 168 traverse the membrane as a helical segment; sequence LFISVAFKLLILLLGSWALFF. At 169–178 the chain is on the cytoplasmic side; the sequence is RRPKASLPRV. A helical membrane pass occupies residues 179 to 199; that stretch reads FVLRALLMVLVFLLVVSYWLF. Residues 200-217 are Extracellular-facing; sequence YGVRILDARERSYQGVVQ. A helical membrane pass occupies residues 218–238; the sequence is FAVSLVDALLFVHYLAVVLLE. The Cytoplasmic segment spans residues 239–521; it reads LRQLQPQFTL…VMRLQSETSV (283 aa).

It belongs to the Vang family. In terms of assembly, homodimer and heterodimer with VANGL1. Interacts through its C-terminal region with the N-terminal half of DVL1, DVL2 and DVL3. The PDZ domain of DVL1, DVL2 and DVL3 is required for the interaction. Also interacts with the PDZ domains of MAGI3, SCRIB/SCRB1 and FZD3. Interacts with PRICKLE3.

The protein resides in the cell membrane. Functionally, involved in the control of early morphogenesis and patterning of both axial midline structures and the development of neural plate. Plays a role in the regulation of planar cell polarity, particularly in the orientation of stereociliary bundles in the cochlea. Required for polarization and movement of myocardializing cells in the outflow tract and seems to act via RHOA signaling to regulate this process. Required for cell surface localization of FZD3 and FZD6 in the inner ear. This is Vang-like protein 2 (VANGL2) from Homo sapiens (Human).